Here is a 265-residue protein sequence, read N- to C-terminus: Phosphatidylglycerol--prolipoprotein diacylglyceryl transferase (265 aa).

The next 7 membrane-spanning stretches (helical) occupy residues 17–37 (LAIR…IWLA), 59–79 (MLFY…VLFY), 94–114 (VWKG…AMSI), 123–143 (VLDV…FGRL), 177–197 (SPLY…WLFA), 204–224 (MAVG…TEYF), and 238–258 (ISAG…MLLI). Arg142 provides a ligand contact to a 1,2-diacyl-sn-glycero-3-phospho-(1'-sn-glycerol).

This sequence belongs to the Lgt family.

Its subcellular location is the cell inner membrane. It carries out the reaction L-cysteinyl-[prolipoprotein] + a 1,2-diacyl-sn-glycero-3-phospho-(1'-sn-glycerol) = an S-1,2-diacyl-sn-glyceryl-L-cysteinyl-[prolipoprotein] + sn-glycerol 1-phosphate + H(+). Its pathway is protein modification; lipoprotein biosynthesis (diacylglyceryl transfer). In terms of biological role, catalyzes the transfer of the diacylglyceryl group from phosphatidylglycerol to the sulfhydryl group of the N-terminal cysteine of a prolipoprotein, the first step in the formation of mature lipoproteins. This chain is Phosphatidylglycerol--prolipoprotein diacylglyceryl transferase, found in Janthinobacterium sp. (strain Marseille) (Minibacterium massiliensis).